A 317-amino-acid chain; its full sequence is Glutaminase (317 aa).

Residues serine 67, asparagine 118, glutamate 162, asparagine 169, tyrosine 193, tyrosine 245, and valine 263 each contribute to the substrate site.

It belongs to the glutaminase family. As to quaternary structure, homotetramer.

It catalyses the reaction L-glutamine + H2O = L-glutamate + NH4(+). The chain is Glutaminase from Brucella abortus (strain S19).